The following is a 341-amino-acid chain: Ferredoxin--NADP reductase (341 aa).

The FAD site is built by glutamate 36, glutamine 44, phenylalanine 49, valine 89, phenylalanine 123, aspartate 289, and threonine 329.

This sequence belongs to the ferredoxin--NADP reductase type 2 family. Homodimer. FAD is required as a cofactor.

The enzyme catalyses 2 reduced [2Fe-2S]-[ferredoxin] + NADP(+) + H(+) = 2 oxidized [2Fe-2S]-[ferredoxin] + NADPH. The chain is Ferredoxin--NADP reductase from Ligilactobacillus salivarius (strain UCC118) (Lactobacillus salivarius).